Reading from the N-terminus, the 128-residue chain is Con-Ins F2 (128 aa).

The N-terminal stretch at 1–24 (MTTSSYFLLVALGLLLYVCRSSFG) is a signal peptide. Intrachain disulfides connect Cys-29/Cys-104, Cys-41/Cys-107, Cys-53/Cys-120, and Cys-106/Cys-111. Residues 59–89 (LQGGTGKKRGRASLLRKRRAFLSMLKARAKR) constitute a propeptide, c peptide. Glu-115 is modified (4-carboxyglutamate; partial). Position 127 is a serine amide (Ser-127).

It belongs to the insulin family. In terms of assembly, heterodimer of A and B chains; disulfide-linked. In terms of tissue distribution, expressed by the venom gland.

The protein resides in the secreted. This venom insulin facilitates prey capture by rapidly inducing hypoglycemic shock. Intraperitoneal injection of this peptide into zebrafish lowers blood glucose with the same potency than human insulin. In vivo, when applied to water, this peptide reduces overall locomotor activity of zebrafish larvae, observed as a significant decrease in the percentage of time spent swimming and movement frequency. The sequence is that of Con-Ins F2 from Conus floridulus (Cone snail).